Consider the following 282-residue polypeptide: ATP synthase gamma chain (282 aa).

Belongs to the ATPase gamma chain family. As to quaternary structure, F-type ATPases have 2 components, CF(1) - the catalytic core - and CF(0) - the membrane proton channel. CF(1) has five subunits: alpha(3), beta(3), gamma(1), delta(1), epsilon(1). CF(0) has three main subunits: a, b and c.

It localises to the cell inner membrane. In terms of biological role, produces ATP from ADP in the presence of a proton gradient across the membrane. The gamma chain is believed to be important in regulating ATPase activity and the flow of protons through the CF(0) complex. In Fusobacterium nucleatum subsp. nucleatum (strain ATCC 25586 / DSM 15643 / BCRC 10681 / CIP 101130 / JCM 8532 / KCTC 2640 / LMG 13131 / VPI 4355), this protein is ATP synthase gamma chain.